A 192-amino-acid polypeptide reads, in one-letter code: 3-hydroxyanthranilate 3,4-dioxygenase (192 aa).

Arginine 50 is a binding site for O2. Fe cation contacts are provided by histidine 54, glutamate 60, and histidine 102. Glutamate 60 contacts substrate. Substrate contacts are provided by arginine 106 and glutamate 116. Cysteine 131, cysteine 134, cysteine 168, and cysteine 171 together coordinate a divalent metal cation.

This sequence belongs to the 3-HAO family. The cofactor is Fe(2+).

The protein resides in the cytoplasm. The catalysed reaction is 3-hydroxyanthranilate + O2 = (2Z,4Z)-2-amino-3-carboxymuconate 6-semialdehyde. It functions in the pathway cofactor biosynthesis; NAD(+) biosynthesis; quinolinate from L-kynurenine: step 3/3. In terms of biological role, catalyzes the oxidative ring opening of 3-hydroxyanthranilate to 2-amino-3-carboxymuconate semialdehyde, which spontaneously cyclizes to quinolinate. The polypeptide is 3-hydroxyanthranilate 3,4-dioxygenase (Coccidioides immitis (strain RS) (Valley fever fungus)).